The primary structure comprises 806 residues: WEB family protein At3g02930, chloroplastic (806 aa).

The N-terminal 78 residues, 1-78 (MASKIKNGLS…PTPPEKTQIR (78 aa)), are a transit peptide targeting the chloroplast. Disordered stretches follow at residues 1 to 94 (MASK…QIKE) and 380 to 403 (KSEQKLGIAEEESSKSEKEAEKLK). Low complexity predominate over residues 9–22 (LSDTTLRKSSSTSL). Positions 34 to 59 (PDSNSPSPTQQQSRLSFERPSSNSKP) are enriched in polar residues. Coiled coils occupy residues 88–530 (QSVQ…FESA), 585–662 (DCLK…IEEN), and 698–757 (ETLD…EDLN). The segment covering 391–403 (ESSKSEKEAEKLK) has biased composition (basic and acidic residues). Disordered stretches follow at residues 684–725 (ENGY…EDET) and 746–777 (KESAKEEEEDLNVVDQSQKTSPVNGLTGEDEL). Basic and acidic residues-rich tracts occupy residues 685 to 699 (NGYRSAEEKSSKVET) and 706 to 725 (KLEEDTEKKEKKERSPEDET). Residues 759 to 769 (VDQSQKTSPVN) show a composition bias toward polar residues.

Belongs to the WEB family.

It localises to the plastid. It is found in the chloroplast. In Arabidopsis thaliana (Mouse-ear cress), this protein is WEB family protein At3g02930, chloroplastic.